A 331-amino-acid chain; its full sequence is Serine racemase (331 aa).

The ATP site is built by Ser-34 and Lys-54. Catalysis depends on Lys-59, which acts as the Proton acceptor. Lys-59 is subject to N6-(pyridoxal phosphate)lysine. Thr-81 contacts Ca(2+). The Proton acceptor role is filled by Ser-84. A pyridoxal 5'-phosphate-binding site is contributed by Asn-86. Tyr-121 lines the ATP pocket. A Mg(2+)-binding site is contributed by Asp-178. The pyridoxal 5'-phosphate site is built by Gly-186, Gly-187, and Gly-188. The Ca(2+) site is built by Glu-210, Ala-214, and Asp-216. Mg(2+)-binding residues include Glu-210, Ala-214, and Asp-216. Mn(2+) contacts are provided by Glu-210, Ala-214, and Asp-216. Lys-278 contributes to the ATP binding site. Ser-314 is a pyridoxal 5'-phosphate binding site. An ATP-binding site is contributed by Asn-317.

Belongs to the serine/threonine dehydratase family. Homodimer. Mg(2+) is required as a cofactor. It depends on Mn(2+) as a cofactor. Requires Ca(2+) as cofactor. The cofactor is pyridoxal 5'-phosphate. As to expression, expressed in the whole plant.

It carries out the reaction L-serine = D-serine. The enzyme catalyses L-serine = pyruvate + NH4(+). The catalysed reaction is D-serine = pyruvate + NH4(+). Its activity is regulated as follows. Inhibited by hydroxylamine. Racemase activity is enhanced by Ca(2+), Mg(2+), Mn(2+), and is decreased by Ni(2+), Zn(2+). Hydratase activity is enhanced by Ca(2+), Mg(2+), Mn(2+), Cu(2+), Fe(2+), Ni(2+). Catalyzes the synthesis of D-serine from L-serine. Has dehydratase activity towards both L-serine and D-serine. Displays high substrate specificity for L-serine, whereas L-alanine, L-arginine, and L-glutamine were poor substrates. The polypeptide is Serine racemase (SR) (Arabidopsis thaliana (Mouse-ear cress)).